Here is a 395-residue protein sequence, read N- to C-terminus: MPRYCAAICCKNRRGRNNKDRKLSFYPFPLHDKERLEKWLKNMKRDSWVPSKYQFLCSDHFTPDSLDIRWGIRYLKQTAVPTIFSLPEDNQGKDPSKKKSQKKNLEDEKEVCPKAKSEESFVLNETKKNIVNTDVPHQHPELLHSSSLVKPPAPKTGSIQNNMLTLNLVKQHTGKPESTLETSVNQDTGRGGFHTCFENLNSTTITLTTSNSESIHQSLETQEVLEVTTSHLANPNFTSNSMEIKSAQENPFLFSTINQTVEELNTNKESVIAIFVPAENSKPSVNSFISAQKETTEMEDTDIEDSLYKDVDYGTEVLQIEHSYCRQDINKEHLWQKVSKLHSKITLLELKEQQTLGRLKSLEALIRQLKQENWLSEENVKIIENHFTTYEVTMI.

The segment at 1–84 (MPRYCAAICC…LKQTAVPTIF (84 aa)) adopts a THAP-type zinc-finger fold. A disordered region spans residues 85–112 (SLPEDNQGKDPSKKKSQKKNLEDEKEVC). Basic and acidic residues predominate over residues 90–112 (NQGKDPSKKKSQKKNLEDEKEVC). The HCFC1-binding motif (HBM) signature appears at 321 to 324 (EHSY). Residues 348-382 (LELKEQQTLGRLKSLEALIRQLKQENWLSEENVKI) are a coiled coil.

As to quaternary structure, interacts with HTRA2; under apoptotic conditions. Interacts with ABRAXAS2. In terms of processing, cleaved by HTRA2 during apoptosis. In terms of tissue distribution, detected in heart. Detected in brain and muscle (at protein level). Highly expressed in the heart. Also found in brain and skeletal muscle.

The protein resides in the nucleus. Functionally, has sequence-specific DNA-binding activity and can function as transcriptional repressor (in vitro). May be a regulator of cell cycle: THAP5 overexpression in human cell lines causes cell cycle arrest at G2/M phase. The protein is THAP domain-containing protein 5 (THAP5) of Homo sapiens (Human).